We begin with the raw amino-acid sequence, 325 residues long: Elongation factor P--(R)-beta-lysine ligase (325 aa).

76 to 78 contacts substrate; it reads SPE. ATP contacts are provided by residues 100-102 and Asn109; that span reads RNE. Residue Tyr118 coordinates substrate. ATP is bound at residue 244-245; sequence EL. Substrate is bound at residue Glu251. Gly300 is an ATP binding site.

Belongs to the class-II aminoacyl-tRNA synthetase family. EpmA subfamily. Homodimer.

It catalyses the reaction D-beta-lysine + L-lysyl-[protein] + ATP = N(6)-((3R)-3,6-diaminohexanoyl)-L-lysyl-[protein] + AMP + diphosphate + H(+). In terms of biological role, with EpmB is involved in the beta-lysylation step of the post-translational modification of translation elongation factor P (EF-P) on 'Lys-34'. Catalyzes the ATP-dependent activation of (R)-beta-lysine produced by EpmB, forming a lysyl-adenylate, from which the beta-lysyl moiety is then transferred to the epsilon-amino group of EF-P 'Lys-34'. The chain is Elongation factor P--(R)-beta-lysine ligase from Salmonella typhi.